We begin with the raw amino-acid sequence, 334 residues long: MIKKLNIFSGMQPSGIPTLGNYIGVLRQWKILQKIYNSIYCIADLHYLTNNKENSKILFKRSLDLLAIYLACDIDPNESVIFLQSHIPEHSQLSWILNCYTYFGELTRMVQFKEKIKNKKNINLGLLSYPVLMASDILLYQTDIVPVGKDQIQHLELSRTIARRFNKLHGDVFIIPEKIISKTGSKIMSLSNPNKKMSKSNLNRNNFISLLDQPYSIIEKIKNAKTDSDNPPKINFDIIKKPGISNLLSIISELRGINIKDLEISFKNKSYKYLKNEVTGAVLEHLKILQKKYFLIRKDEKYLINILKSGSKKAKKIARGTLKKVNESIGLLNF.

ATP contacts are provided by residues 12 to 14 (QPS) and 20 to 21 (GN). A 'HIGH' region motif is present at residues 13–21 (PSGIPTLGN). Asp136 contacts L-tryptophan. ATP-binding positions include 148-150 (GKD), Ile187, and 196-200 (KMSKS). Residues 196 to 200 (KMSKS) carry the 'KMSKS' region motif.

It belongs to the class-I aminoacyl-tRNA synthetase family. Homodimer.

Its subcellular location is the cytoplasm. It carries out the reaction tRNA(Trp) + L-tryptophan + ATP = L-tryptophyl-tRNA(Trp) + AMP + diphosphate + H(+). In terms of biological role, catalyzes the attachment of tryptophan to tRNA(Trp). This is Tryptophan--tRNA ligase from Wigglesworthia glossinidia brevipalpis.